The sequence spans 25 residues: MGGVGKTKRMRRLKRKRRKMRQRSK.

The segment at 1–25 (MGGVGKTKRMRRLKRKRRKMRQRSK) is disordered.

It belongs to the eukaryotic ribosomal protein eS32 family. Component of the small ribosomal subunit.

This Glycine max (Soybean) protein is Small ribosomal subunit protein eS32 (RPL41).